The sequence spans 315 residues: Olfactory receptor 8J3 (315 aa).

Residues M1–I25 lie on the Extracellular side of the membrane. N5 is a glycosylation site (N-linked (GlcNAc...) asparagine). Residues P26–I46 form a helical membrane-spanning segment. Residues T47 to R54 are Cytoplasmic-facing. Residues L55–T75 form a helical membrane-spanning segment. Topologically, residues V76 to T99 are extracellular. C97 and C189 are oxidised to a cystine. The chain crosses the membrane as a helical span at residues Q100–Y120. Residues D121–R139 lie on the Cytoplasmic side of the membrane. A helical membrane pass occupies residues L140–S160. Over P161 to T197 the chain is Extracellular. Residues I198 to S217 traverse the membrane as a helical segment. Residues Y218 to A237 are Cytoplasmic-facing. Residues F238 to M258 form a helical membrane-spanning segment. Residues Y259–D271 are Extracellular-facing. N-linked (GlcNAc...) asparagine glycosylation occurs at N265. Residues K272–L292 traverse the membrane as a helical segment. Residues R293–M315 lie on the Cytoplasmic side of the membrane.

Belongs to the G-protein coupled receptor 1 family.

The protein resides in the cell membrane. Functionally, odorant receptor. The polypeptide is Olfactory receptor 8J3 (OR8J3) (Homo sapiens (Human)).